The chain runs to 808 residues: Copal-8-ol diphosphate hydratase, chloroplastic (808 aa).

Residues methionine 1–arginine 50 constitute a chloroplast transit peptide. The stretch at aspartate 190–serine 219 forms a coiled coil. Lysine 256 contacts substrate. Residues aspartate 391 and aspartate 393 each coordinate Mg(2+). The short motif at aspartate 391–aspartate 394 is the DXDD motif element. Lysine 477 is a binding site for substrate.

Belongs to the terpene synthase family. Mg(2+) is required as a cofactor. As to expression, expressed in stems, leaves and trichomes. Not detected in roots and seeds. Higher expression in young leaves than in fully expanded leaves.

It localises to the plastid. Its subcellular location is the chloroplast. It carries out the reaction (2E,6E,10E)-geranylgeranyl diphosphate + H2O = 8-hydroxycopalyl diphosphate. The protein operates within secondary metabolite biosynthesis; terpenoid biosynthesis. Its function is as follows. Involved in the biosynthesis of oxygen-containing labdane-type diterpenes that may be implicated in direct and indirect defense mechanisms. No activity with geranyl diphosphate or farnesyl diphosphate as substrate. This Cistus creticus subsp. creticus (Rock rose) protein is Copal-8-ol diphosphate hydratase, chloroplastic.